A 511-amino-acid chain; its full sequence is Probable G-protein coupled receptor 152 (511 aa).

The interval 1 to 20 (MDTAVEANLGAAGHGPRTEL) is disordered. Topologically, residues 1-33 (MDTAVEANLGAAGHGPRTELSDEDYYPQGSWDT) are extracellular. The chain crosses the membrane as a helical span at residues 34–54 (VFLVALLLLGLPANGLMAWLA). Over 55–65 (GSQARHGAGTR) the chain is Cytoplasmic. A helical membrane pass occupies residues 66–86 (LALLLLSLALSDFLFLAAATF). Residues 87-105 (QILEIQHGGHWPLGTAACR) are Extracellular-facing. Cysteine 104 and cysteine 182 are disulfide-bonded. The chain crosses the membrane as a helical span at residues 106 to 126 (FYYFLWGVSYSSGLFLLTALS). Topologically, residues 127 to 148 (LDRCLLALCPRWYPGHRPARLP) are cytoplasmic. Residues 149 to 169 (LWVCAGVWVLATLFSVPWLVF) traverse the membrane as a helical segment. Residues 170–194 (PEAAVWWYDLVICLDFWDTEELPLR) are Extracellular-facing. The helical transmembrane segment at 195–215 (MLEILGGFLPFLLLLVCHVLT) threads the bilayer. Over 216 to 258 (QATACRTCCGHQPRRMACHGFARVAKTILSAYVVLRLPYQLAQ) the chain is Cytoplasmic. Residues 259-279 (LLYLAFLWDVYPGYLLWEALV) traverse the membrane as a helical segment. The Extracellular portion of the chain corresponds to 280-282 (YSD). The helical transmembrane segment at 283-303 (YLILLNSCLSPFLCLAASADL) threads the bilayer. The Cytoplasmic portion of the chain corresponds to 304–511 (RALLRTVLSS…PEEAPSAGPT (208 aa)). Disordered regions lie at residues 328 to 349 (PAEP…DSVV), 361 to 386 (SDSV…PTVG), and 407 to 511 (PQLD…AGPT). 2 stretches are compositionally biased toward polar residues: residues 335–345 (PGPTSEGQSRL) and 369–386 (VSPS…PTVG). The segment covering 419 to 433 (PSAQPQSKSVVQPQV) has biased composition (low complexity). 2 stretches are compositionally biased toward polar residues: residues 435–453 (PLTQ…NTET) and 462–473 (SASNPGEENSSG).

Belongs to the G-protein coupled receptor 1 family.

It localises to the cell membrane. Orphan receptor. The polypeptide is Probable G-protein coupled receptor 152 (Gpr152) (Mus musculus (Mouse)).